A 90-amino-acid polypeptide reads, in one-letter code: Photosystem I reaction center subunit PsaK 2 (90 aa).

The next 2 helical transmembrane spans lie at 20–42 and 67–89; these read LSVG…FAIQ and LATM…SSGI.

This sequence belongs to the PsaG/PsaK family.

The protein localises to the cellular thylakoid membrane. The protein is Photosystem I reaction center subunit PsaK 2 (psaK2) of Synechocystis sp. (strain ATCC 27184 / PCC 6803 / Kazusa).